We begin with the raw amino-acid sequence, 485 residues long: E3 ubiquitin-protein ligase TRIM68 (485 aa).

An RING-type zinc finger spans residues 16–61 (CPICMTFLREPVSISCGHTFCHSCLSGLWKLPGESQNLSYTCPLCR). Residues 93–134 (LKTDVCDLHKEQLTMFCKEDDMVTCEACKQSPEHEAHSVVPI) form a B box-type zinc finger. Zn(2+) is bound by residues Cys98, His101, Cys120, and His126. Residues 144–226 (KLQQALEHLR…EQEKGETASK (83 aa)) adopt a coiled-coil conformation. The 199-residue stretch at 285-483 (LKTDCRVLGL…TPLTICTLGG (199 aa)) folds into the B30.2/SPRY domain.

Belongs to the TRIM/RBCC family. In terms of assembly, interacts with AR/androgen receptor (via ligand-binding domain). Interacts with KAT5/TIP60. In terms of processing, auto-ubiquitinated.

The protein resides in the cytoplasm. The protein localises to the perinuclear region. It is found in the nucleus. It carries out the reaction S-ubiquitinyl-[E2 ubiquitin-conjugating enzyme]-L-cysteine + [acceptor protein]-L-lysine = [E2 ubiquitin-conjugating enzyme]-L-cysteine + N(6)-ubiquitinyl-[acceptor protein]-L-lysine.. Its pathway is protein modification; protein ubiquitination. In terms of biological role, functions as a ubiquitin E3 ligase. Acts as a coactivator of androgen receptor (AR) depending on its ubiquitin ligase activity. This Mus musculus (Mouse) protein is E3 ubiquitin-protein ligase TRIM68 (Trim68).